The sequence spans 284 residues: GPN-loop GTPase 3 (284 aa).

13–18 contacts GTP; the sequence is GSGKST. The Gly-Pro-Asn (GPN)-loop; involved in dimer interface motif lies at 72–74; sequence GPN. Position 174 to 177 (174 to 177) interacts with GTP; the sequence is TKMD. The interval 261–284 is disordered; it reads KEPKEHEEESSSMFDEYFQERQNE.

Belongs to the GPN-loop GTPase family. As to quaternary structure, heterodimer with GPN1. Binds to RNA polymerase II (RNAPII). Interacts directly with subunits RPB4 and RPB7 and the CTD of RPB1.

Functionally, small GTPase required for proper localization of RNA polymerase II (RNAPII). May act at an RNAP assembly step prior to nuclear import. This Rattus norvegicus (Rat) protein is GPN-loop GTPase 3.